The primary structure comprises 306 residues: Bifunctional protein FolD (306 aa).

Residues Gly-164–Ser-166, Ser-189, and Thr-230 each bind NADP(+).

The protein belongs to the tetrahydrofolate dehydrogenase/cyclohydrolase family. In terms of assembly, homodimer.

The catalysed reaction is (6R)-5,10-methylene-5,6,7,8-tetrahydrofolate + NADP(+) = (6R)-5,10-methenyltetrahydrofolate + NADPH. The enzyme catalyses (6R)-5,10-methenyltetrahydrofolate + H2O = (6R)-10-formyltetrahydrofolate + H(+). Its pathway is one-carbon metabolism; tetrahydrofolate interconversion. Functionally, catalyzes the oxidation of 5,10-methylenetetrahydrofolate to 5,10-methenyltetrahydrofolate and then the hydrolysis of 5,10-methenyltetrahydrofolate to 10-formyltetrahydrofolate. In Solibacter usitatus (strain Ellin6076), this protein is Bifunctional protein FolD.